A 297-amino-acid chain; its full sequence is Aspartate dehydrogenase domain-containing protein (297 aa).

Phosphoserine is present on residues serine 24 and serine 172.

The protein belongs to the L-aspartate dehydrogenase family.

This chain is Aspartate dehydrogenase domain-containing protein, found in Rattus norvegicus (Rat).